The following is a 228-amino-acid chain: Eukaryotic translation initiation factor 4E-1 (228 aa).

EIF4G-binding regions lie at residues 53–56 (HLLE) and 63–99 (FDTP…NNIH). MRNA is bound by residues 71 to 76 (KQDDWG), Lys-103, and 121 to 122 (WE). A disulfide bridge links Cys-126 with Cys-164. The segment at 147-156 (YTLLAMIGEQ) is EIF4G-binding. MRNA-binding positions include 171–176 (RGRAEK) and 216–220 (RKLDR).

This sequence belongs to the eukaryotic initiation factor 4E family. EIF4F is a multi-subunit complex, the composition of which varies with external and internal environmental conditions. It is composed of at least EIF4A, EIF4E and EIF4G. EIF4E is also known to interact with other partners. In higher plants two isoforms of EIF4F have been identified, named isoform EIF4F and isoform EIF(iso)4F. Isoform EIF4F has subunits p220 and p26, whereas isoform EIF(iso)4F has subunits p82 and p28. As to quaternary structure, (Microbial infection) Interacts with potyvirus viral genome-linked protein (VPg); this interaction is possible in susceptible hosts but impaired in resistant plants. Post-translationally, according to the redox status, the Cys-126-Cys-164 disulfide bridge may have a role in regulating protein function by affecting its ability to bind capped mRNA.

The protein localises to the nucleus. Its subcellular location is the cytoplasm. Component of the protein complex eIF4F, which is involved in the recognition of the mRNA cap, ATP-dependent unwinding of 5'-terminal secondary structure and recruitment of mRNA to the ribosome. Recognizes and binds the 7-methylguanosine-containing mRNA cap during an early step in the initiation of protein synthesis and facilitates ribosome binding by inducing the unwinding of the mRNAs secondary structures. Key component of recessive resistance to potyviruses. Functionally, (Microbial infection) Susceptibility host factor required for viral infection by recruiting viral RNAs to the host ribosomal complex via an interaction with viral genome-linked protein (VPg). Also seems to be involved in virus movement from cell-to-cell. The chain is Eukaryotic translation initiation factor 4E-1 from Pisum sativum (Garden pea).